A 245-amino-acid polypeptide reads, in one-letter code: 8-amino-3,8-dideoxy-manno-octulosonate cytidylyltransferase (245 aa).

This sequence belongs to the KdsB family.

The protein localises to the cytoplasm. The enzyme catalyses 8-amino-3,8-dideoxy-alpha-D-manno-octulosonate + CTP = CMP-8-amino-3,8-dideoxy-alpha-D-manno-oct-2-ulosonate + diphosphate. Its pathway is bacterial outer membrane biogenesis; lipopolysaccharide biosynthesis. Functionally, activates KDO8N (a required 8-carbon sugar) for incorporation into bacterial lipopolysaccharide in the Shewanella genus. The sequence is that of 8-amino-3,8-dideoxy-manno-octulosonate cytidylyltransferase from Shewanella amazonensis (strain ATCC BAA-1098 / SB2B).